We begin with the raw amino-acid sequence, 477 residues long: UDP-galactose-lipid carrier transferase (477 aa).

6 helical membrane passes run 16-36 (SLAL…IVLI), 52-72 (LDLK…WFWV), 93-113 (TILI…WELS), 115-135 (WIWI…RACV), 175-195 (VIAF…GVPV), and 284-304 (FDLV…VILI). At 305–477 (FMVSRDGGAP…GVVLKRDGAY (173 aa)) the chain is on the cytoplasmic side.

Belongs to the bacterial sugar transferase family.

It localises to the cell membrane. It participates in glycan metabolism; exopolysaccharide biosynthesis. Functionally, involved in the biosynthesis of amylovoran which functions as a virulence factor. May act as a sugar transferase and may be involved in the export of the repeating unit by flipping the lipid carrier to the periplasmic face of the inner membrane. In Erwinia amylovora (Fire blight bacteria), this protein is UDP-galactose-lipid carrier transferase (amsG).